The following is a 1006-amino-acid chain: Probable beta-galactosidase A (1006 aa).

Positions 1–18 are cleaved as a signal peptide; it reads MKLLSVCAIALLAAQAAG. Tyrosine 96, asparagine 140, alanine 141, and glutamate 142 together coordinate substrate. N-linked (GlcNAc...) asparagine glycosylation occurs at asparagine 156. Residue asparagine 199 coordinates substrate. Glutamate 200 (proton donor) is an active-site residue. Cysteine 205 and cysteine 206 are oxidised to a cystine. Residue tyrosine 260 coordinates substrate. Residues cysteine 266 and cysteine 315 are joined by a disulfide bond. Glutamate 298 functions as the Nucleophile in the catalytic mechanism. Tyrosine 364 contributes to the substrate binding site. N-linked (GlcNAc...) asparagine glycosylation is found at asparagine 373, asparagine 402, asparagine 422, asparagine 622, asparagine 760, asparagine 777, and asparagine 914.

The protein belongs to the glycosyl hydrolase 35 family.

The protein localises to the secreted. It carries out the reaction Hydrolysis of terminal non-reducing beta-D-galactose residues in beta-D-galactosides.. In terms of biological role, cleaves beta-linked terminal galactosyl residues from gangliosides, glycoproteins, and glycosaminoglycans. In Aspergillus fumigatus (strain ATCC MYA-4609 / CBS 101355 / FGSC A1100 / Af293) (Neosartorya fumigata), this protein is Probable beta-galactosidase A (lacA).